Here is an 826-residue protein sequence, read N- to C-terminus: Ribosome-releasing factor 2, mitochondrial (826 aa).

The transit peptide at 1-44 (MIVRNLLGKNRLCCLQPKLLLSTLSQRPQLQLSLQLLCRATRLY) directs the protein to the mitochondrion. A tr-type G domain is found at 53–340 (PKTRNIGIIA…GITNYLPSPL (288 aa)). GTP is bound by residues 62–69 (AHIDAGKT), 126–130 (DTPGH), and 180–183 (NKMD).

The protein belongs to the TRAFAC class translation factor GTPase superfamily. Classic translation factor GTPase family. EF-G/EF-2 subfamily.

The protein resides in the mitochondrion. In terms of biological role, mitochondrial GTPase that mediates the disassembly of ribosomes from messenger RNA at the termination of mitochondrial protein biosynthesis. Not involved in the GTP-dependent ribosomal translocation step during translation elongation. The chain is Ribosome-releasing factor 2, mitochondrial from Lodderomyces elongisporus (strain ATCC 11503 / CBS 2605 / JCM 1781 / NBRC 1676 / NRRL YB-4239) (Yeast).